A 359-amino-acid polypeptide reads, in one-letter code: Alanine racemase (359 aa).

Lysine 34 (proton acceptor; specific for D-alanine) is an active-site residue. Lysine 34 bears the N6-(pyridoxal phosphate)lysine mark. Arginine 129 provides a ligand contact to substrate. Tyrosine 254 serves as the catalytic Proton acceptor; specific for L-alanine. Substrate is bound at residue methionine 302.

It belongs to the alanine racemase family. Requires pyridoxal 5'-phosphate as cofactor.

The enzyme catalyses L-alanine = D-alanine. The protein operates within amino-acid biosynthesis; D-alanine biosynthesis; D-alanine from L-alanine: step 1/1. In terms of biological role, catalyzes the interconversion of L-alanine and D-alanine. May also act on other amino acids. In Yersinia pestis, this protein is Alanine racemase (alr).